The chain runs to 150 residues: Cytochrome c oxidase subunit 5A, mitochondrial (150 aa).

The transit peptide at 1-41 (MLGAALRRCAVAATTRAGPRGLLHSARTPGPAAAIQSVRCY) directs the protein to the mitochondrion. Positions 2–17 (LGAALRRCAVAATTRA) match the SIFI-degron motif. N6-acetyllysine is present on residues lysine 87 and lysine 113. At threonine 141 the chain carries Phosphothreonine.

This sequence belongs to the cytochrome c oxidase subunit 5A family. In terms of assembly, component of the cytochrome c oxidase (complex IV, CIV), a multisubunit enzyme composed of 14 subunits. The complex is composed of a catalytic core of 3 subunits MT-CO1, MT-CO2 and MT-CO3, encoded in the mitochondrial DNA, and 11 supernumerary subunits COX4I, COX5A, COX5B, COX6A, COX6B, COX6C, COX7A, COX7B, COX7C, COX8 and NDUFA4, which are encoded in the nuclear genome. The complex exists as a monomer or a dimer and forms supercomplexes (SCs) in the inner mitochondrial membrane with NADH-ubiquinone oxidoreductase (complex I, CI) and ubiquinol-cytochrome c oxidoreductase (cytochrome b-c1 complex, complex III, CIII), resulting in different assemblies (supercomplex SCI(1)III(2)IV(1) and megacomplex MCI(2)III(2)IV(2)). Interacts with AFG1L. Interacts with RAB5IF. In response to mitochondrial stress, the precursor protein is ubiquitinated by the SIFI complex in the cytoplasm before mitochondrial import, leading to its degradation. Within the SIFI complex, UBR4 initiates ubiquitin chain that are further elongated or branched by KCMF1.

The protein localises to the mitochondrion inner membrane. The protein operates within energy metabolism; oxidative phosphorylation. Component of the cytochrome c oxidase, the last enzyme in the mitochondrial electron transport chain which drives oxidative phosphorylation. The respiratory chain contains 3 multisubunit complexes succinate dehydrogenase (complex II, CII), ubiquinol-cytochrome c oxidoreductase (cytochrome b-c1 complex, complex III, CIII) and cytochrome c oxidase (complex IV, CIV), that cooperate to transfer electrons derived from NADH and succinate to molecular oxygen, creating an electrochemical gradient over the inner membrane that drives transmembrane transport and the ATP synthase. Cytochrome c oxidase is the component of the respiratory chain that catalyzes the reduction of oxygen to water. Electrons originating from reduced cytochrome c in the intermembrane space (IMS) are transferred via the dinuclear copper A center (CU(A)) of subunit 2 and heme A of subunit 1 to the active site in subunit 1, a binuclear center (BNC) formed by heme A3 and copper B (CU(B)). The BNC reduces molecular oxygen to 2 water molecules using 4 electrons from cytochrome c in the IMS and 4 protons from the mitochondrial matrix. The sequence is that of Cytochrome c oxidase subunit 5A, mitochondrial (COX5A) from Gorilla gorilla gorilla (Western lowland gorilla).